A 221-amino-acid polypeptide reads, in one-letter code: Triosephosphate isomerase (221 aa).

Position 8–10 (8–10) interacts with substrate; the sequence is NLK. Histidine 92 functions as the Electrophile in the catalytic mechanism. The active-site Proton acceptor is glutamate 140. Substrate contacts are provided by residues isoleucine 145, glycine 180, and 201–202; that span reads AS.

Belongs to the triosephosphate isomerase family. Homotetramer; dimer of dimers.

Its subcellular location is the cytoplasm. The catalysed reaction is D-glyceraldehyde 3-phosphate = dihydroxyacetone phosphate. It participates in carbohydrate biosynthesis; gluconeogenesis. Its pathway is carbohydrate degradation; glycolysis; D-glyceraldehyde 3-phosphate from glycerone phosphate: step 1/1. Involved in the gluconeogenesis. Catalyzes stereospecifically the conversion of dihydroxyacetone phosphate (DHAP) to D-glyceraldehyde-3-phosphate (G3P). This is Triosephosphate isomerase from Methanococcoides burtonii (strain DSM 6242 / NBRC 107633 / OCM 468 / ACE-M).